Here is a 476-residue protein sequence, read N- to C-terminus: Protein transport protein Sec61 subunit alpha isoform 1 (476 aa).

Residues 1–33 lie on the Cytoplasmic side of the membrane; the sequence is MGIKFLEVIKPFCVILPEIQKPERKIQFKEKVL. Residues 34-53 form a helical membrane-spanning segment; it reads WTAITLFIFLVCCQIPLFGI. At 54-76 the chain is on the lumenal side; the sequence is MSSDSADPFYWMRVILASNRGTL. The helical transmembrane segment at 77-96 threads the bilayer; sequence MELGISPIVTSGLIMQLLAG. Residues 97–117 are Cytoplasmic-facing; that stretch reads AKIIEVGDTPKDRALFNGAQK. A helical membrane pass occupies residues 118 to 138; that stretch reads LFGMTITIGQSIVYVMTGMYG. Residues 139 to 144 are Lumenal-facing; it reads DPSEMG. Residues 145-165 form a helical membrane-spanning segment; the sequence is AGVCLLITIQLFVAGLIVLLL. Topologically, residues 166-172 are cytoplasmic; sequence DELLQKG. A helical membrane pass occupies residues 173 to 193; that stretch reads YGLGSGISLFIATNICETIVW. Residues 194 to 240 are Lumenal-facing; that stretch reads KAFSPTTVNTGRGMEFEGAIIALFHLLATRTDKVRALREAFYRQNLP. The helical transmembrane segment at 241-261 threads the bilayer; sequence NLMNLIATIFVFAVVIYFQGF. The Cytoplasmic portion of the chain corresponds to 262–288; the sequence is RVDLPIKSARYRGQYNTYPIKLFYTSN. Residues 289 to 309 form a helical membrane-spanning segment; it reads IPIILQSALVSNLYVISQMLS. The Lumenal portion of the chain corresponds to 310 to 354; the sequence is ARFSGNLLVSLLGTWSDTSSGGPARAYPVGGLCYYLSPPESFGSV. The helical transmembrane segment at 355-375 threads the bilayer; sequence LEDPVHAVVYIVFMLGSCAFF. The Cytoplasmic segment spans residues 376–420; sequence SKTWIEVSGSSAKDVAKQLKEQQMVMRGHRETSMVHELNRYIPTA. A helical membrane pass occupies residues 421 to 441; sequence AAFGGLCIGALSVLADFLGAI. Over 442-445 the chain is Lumenal; that stretch reads GSGT. The chain crosses the membrane as a helical span at residues 446 to 462; the sequence is GILLAVTIIYQYFEIFV. At 463–476 the chain is on the cytoplasmic side; sequence KEQSEVGSMGALLF.

It belongs to the SecY/SEC61-alpha family. As to quaternary structure, the SEC61 channel-forming translocon complex consists of channel-forming core components SEC61A1, SEC61B and SEC61G and different auxiliary components such as SEC62 and SEC63. The SEC61 channel associates with the multi-pass translocon (MPT) complex.

The protein localises to the endoplasmic reticulum membrane. In terms of biological role, component of SEC61 channel-forming translocon complex that mediates transport of signal peptide-containing precursor polypeptides across the endoplasmic reticulum (ER). Forms a ribosome receptor and a gated pore in the ER membrane, both functions required for cotranslational translocation of nascent polypeptides. May cooperate with auxiliary protein SEC62, SEC63 and HSPA5/BiP to enable post-translational transport of small presecretory proteins. The SEC61 channel is also involved in ER membrane insertion of transmembrane proteins: it mediates membrane insertion of the first few transmembrane segments of proteins, while insertion of subsequent transmembrane regions of multi-pass membrane proteins is mediated by the multi-pass translocon (MPT) complex. The SEC61 channel cooperates with the translocating protein TRAM1 to import nascent proteins into the ER. Controls the passive efflux of calcium ions from the ER lumen to the cytosol through SEC61 channel, contributing to the maintenance of cellular calcium homeostasis. Plays a critical role in nephrogenesis, specifically at pronephros stage. The protein is Protein transport protein Sec61 subunit alpha isoform 1 (SEC61A1) of Bos taurus (Bovine).